We begin with the raw amino-acid sequence, 299 residues long: Probable lipid kinase YegS-like (299 aa).

Residues 1–129 form the DAGKc domain; that stretch reads MSERKALLIL…IDLGEVGGQM (129 aa). Residues threonine 39, 65–71, and threonine 92 contribute to the ATP site; that span reads GDGTLRD. Mg(2+) contacts are provided by leucine 210, aspartate 213, and leucine 215. The active-site Proton acceptor is the glutamate 268.

The protein belongs to the diacylglycerol/lipid kinase family. YegS lipid kinase subfamily. Mg(2+) serves as cofactor. It depends on Ca(2+) as a cofactor.

It localises to the cytoplasm. Functionally, probably phosphorylates lipids; the in vivo substrate is unknown. The chain is Probable lipid kinase YegS-like from Pseudomonas fluorescens (strain ATCC BAA-477 / NRRL B-23932 / Pf-5).